Here is a 795-residue protein sequence, read N- to C-terminus: Phenylalanine--tRNA ligase beta subunit (795 aa).

The tRNA-binding domain occupies 39–148; that stretch reads AGTFNGVVVG…LDAPIGTDLR (110 aa). Positions 401–476 constitute a B5 domain; sequence PKVNTVQLRR…RIYGYNSIPN (76 aa). Mg(2+) is bound by residues Asp454, Asp460, Glu463, and Glu464. The region spanning 701 to 794 is the FDX-ACB domain; sequence SKFPANRRDL…VKQRFNAELR (94 aa).

This sequence belongs to the phenylalanyl-tRNA synthetase beta subunit family. Type 1 subfamily. Tetramer of two alpha and two beta subunits. It depends on Mg(2+) as a cofactor.

It is found in the cytoplasm. The enzyme catalyses tRNA(Phe) + L-phenylalanine + ATP = L-phenylalanyl-tRNA(Phe) + AMP + diphosphate + H(+). This is Phenylalanine--tRNA ligase beta subunit from Haemophilus influenzae (strain 86-028NP).